Consider the following 280-residue polypeptide: Endochitinase A (280 aa).

An N-terminal signal peptide occupies residues methionine 1–alanine 25. Residues glutamine 26–serine 60 form the Chitin-binding type-1 domain. Cystine bridges form between cysteine 28-cysteine 36, cysteine 30-cysteine 42, cysteine 35-cysteine 49, and cysteine 53-cysteine 58. The hinge region (poly-Gly) stretch occupies residues glycine 61–glycine 77. The tract at residues alanine 78–cysteine 280 is catalytic. Cysteines 100 and 149 form a disulfide. Catalysis depends on glutamate 144, which acts as the Proton donor. Residue asparagine 155 is glycosylated (N-linked (GlcNAc...) asparagine). 2 disulfides stabilise this stretch: cysteine 161-cysteine 170 and cysteine 248-cysteine 280. The N-linked (GlcNAc...) asparagine glycan is linked to asparagine 277.

Belongs to the glycosyl hydrolase 19 family. Chitinase class IV subfamily.

It localises to the secreted. It catalyses the reaction Random endo-hydrolysis of N-acetyl-beta-D-glucosaminide (1-&gt;4)-beta-linkages in chitin and chitodextrins.. Inactivated by l-ethyl-3-(3-dimethylaminopropyl)carbodiimide (EDC) in the absence of exogenous nucleophiles (e.g. GlcNAc4, GlcNAc3 and GlcNAc2). Not inhibited by tetra-N-acetylchitopentaose or modified chitotetraose substrate TMG-chitotriomycin-pMP, containing a free, non-acetylated glucosaminyl residue or a N-trimethylamino glucosamine (TMG) residue at the non-reducing terminus, respectively. Its function is as follows. Defense against chitin-containing fungal pathogens. Hydrolyzes glycol chitin and tetra-N-acetylchitotetraose in vitro. Its action is countered by fungal polyglycine hydrolases and fungalysin, that cleave the chitin-binding domain from the protein. The polypeptide is Endochitinase A (Zea mays (Maize)).